Consider the following 233-residue polypeptide: MKLFDYAPLSLAWREFLQSEFKKPYFLEIEKRYLEALKSPKTIFPKSSHLFYALNLTPPCAVKIILLGQDPYHSIYLENSQELPVAMGLSFGVNPNAPIPPSLRNIFKELHANLGVPIPCCGDLSAWAKRGMLLLNAILSVEKKQAASHQYIGWENFSDRILARLFETTSPLIVVLLGKVAQKKIALIPKNKHIIITAPHPSPLARGFLGSGVFTSIQKAYREIYRKDFDFSL.

Catalysis depends on aspartate 70, which acts as the Proton acceptor.

This sequence belongs to the uracil-DNA glycosylase (UDG) superfamily. UNG family.

Its subcellular location is the cytoplasm. It carries out the reaction Hydrolyzes single-stranded DNA or mismatched double-stranded DNA and polynucleotides, releasing free uracil.. Functionally, excises uracil residues from the DNA which can arise as a result of misincorporation of dUMP residues by DNA polymerase or due to deamination of cytosine. The polypeptide is Uracil-DNA glycosylase (Helicobacter acinonychis (strain Sheeba)).